The sequence spans 48 residues: Small, acid-soluble spore protein P (48 aa).

Over residues 1–12 the composition is skewed to basic and acidic residues; the sequence is MTNKNDGKDMRK. The tract at residues 1-48 is disordered; sequence MTNKNDGKDMRKNAPKGAQPGQPEPLSGSKKVKNRNHTRQKHNSSHDM. The segment covering 30-48 has biased composition (basic residues); the sequence is KKVKNRNHTRQKHNSSHDM.

It belongs to the SspP family.

It localises to the spore core. The sequence is that of Small, acid-soluble spore protein P from Bacillus licheniformis (strain ATCC 14580 / DSM 13 / JCM 2505 / CCUG 7422 / NBRC 12200 / NCIMB 9375 / NCTC 10341 / NRRL NRS-1264 / Gibson 46).